Reading from the N-terminus, the 417-residue chain is Histidine--tRNA ligase (417 aa).

This sequence belongs to the class-II aminoacyl-tRNA synthetase family. In terms of assembly, homodimer.

It localises to the cytoplasm. The catalysed reaction is tRNA(His) + L-histidine + ATP = L-histidyl-tRNA(His) + AMP + diphosphate + H(+). In Oleidesulfovibrio alaskensis (strain ATCC BAA-1058 / DSM 17464 / G20) (Desulfovibrio alaskensis), this protein is Histidine--tRNA ligase.